The chain runs to 498 residues: Glycerol kinase (498 aa).

An ADP-binding site is contributed by T12. Residues T12, T13, and S14 each coordinate ATP. T12 is a sn-glycerol 3-phosphate binding site. R16 lines the ADP pocket. Positions 82, 83, and 134 each coordinate sn-glycerol 3-phosphate. Glycerol-binding residues include R82, E83, and Y134. H230 carries the phosphohistidine; by HPr modification. D244 lines the sn-glycerol 3-phosphate pocket. Residues D244 and Q245 each contribute to the glycerol site. T266 and G309 together coordinate ADP. ATP is bound by residues T266, G309, Q313, and G410. ADP-binding residues include G410 and N414.

It belongs to the FGGY kinase family. In terms of assembly, homotetramer and homodimer (in equilibrium). Post-translationally, the phosphoenolpyruvate-dependent sugar phosphotransferase system (PTS), including enzyme I, and histidine-containing protein (HPr) are required for the phosphorylation, which leads to the activation of the enzyme.

The enzyme catalyses glycerol + ATP = sn-glycerol 3-phosphate + ADP + H(+). The protein operates within polyol metabolism; glycerol degradation via glycerol kinase pathway; sn-glycerol 3-phosphate from glycerol: step 1/1. Activated by phosphorylation and inhibited by fructose 1,6-bisphosphate (FBP). Key enzyme in the regulation of glycerol uptake and metabolism. Catalyzes the phosphorylation of glycerol to yield sn-glycerol 3-phosphate. This chain is Glycerol kinase, found in Staphylococcus aureus (strain MW2).